A 308-amino-acid polypeptide reads, in one-letter code: Glutaminase 2 (308 aa).

Substrate is bound by residues Ser66, Asn117, Glu161, Asn168, Tyr192, Tyr244, and Val262.

Belongs to the glutaminase family. As to quaternary structure, homotetramer.

It catalyses the reaction L-glutamine + H2O = L-glutamate + NH4(+). This Escherichia coli O157:H7 protein is Glutaminase 2.